Here is a 159-residue protein sequence, read N- to C-terminus: Protein-export protein SecB (159 aa).

The protein belongs to the SecB family. Homotetramer, a dimer of dimers. One homotetramer interacts with 1 SecA dimer.

It is found in the cytoplasm. In terms of biological role, one of the proteins required for the normal export of preproteins out of the cell cytoplasm. It is a molecular chaperone that binds to a subset of precursor proteins, maintaining them in a translocation-competent state. It also specifically binds to its receptor SecA. The protein is Protein-export protein SecB of Nitrobacter winogradskyi (strain ATCC 25391 / DSM 10237 / CIP 104748 / NCIMB 11846 / Nb-255).